The following is a 492-amino-acid chain: Bifunctional protein GlmU (492 aa).

The pyrophosphorylase stretch occupies residues 1–241 (MTFRGDTAVL…NALVAGVNNR (241 aa)). UDP-N-acetyl-alpha-D-glucosamine is bound by residues 12-15 (LAAG), lysine 26, glutamine 83, 88-89 (GT), 112-114 (SGD), glycine 151, glutamate 166, asparagine 181, and asparagine 239. A Mg(2+)-binding site is contributed by aspartate 114. Mg(2+) is bound at residue asparagine 239. The linker stretch occupies residues 242–262 (VQLAELSAELNRRIVATHQVA). The N-acetyltransferase stretch occupies residues 263-492 (GVTIIDPATT…KQSQQKSEPD (230 aa)). UDP-N-acetyl-alpha-D-glucosamine is bound by residues arginine 344 and lysine 362. Catalysis depends on histidine 374, which acts as the Proton acceptor. UDP-N-acetyl-alpha-D-glucosamine is bound by residues tyrosine 377 and asparagine 388. Residues alanine 391, 397–398 (NY), serine 416, and alanine 434 contribute to the acetyl-CoA site. Residues 461–492 (VQRKRPGSAAAQAAEKASTRTGKQSQQKSEPD) are disordered. Positions 479 to 492 (TRTGKQSQQKSEPD) are enriched in polar residues.

It in the N-terminal section; belongs to the N-acetylglucosamine-1-phosphate uridyltransferase family. The protein in the C-terminal section; belongs to the transferase hexapeptide repeat family. Homotrimer. Mg(2+) is required as a cofactor.

It is found in the cytoplasm. The catalysed reaction is alpha-D-glucosamine 1-phosphate + acetyl-CoA = N-acetyl-alpha-D-glucosamine 1-phosphate + CoA + H(+). The enzyme catalyses N-acetyl-alpha-D-glucosamine 1-phosphate + UTP + H(+) = UDP-N-acetyl-alpha-D-glucosamine + diphosphate. It participates in nucleotide-sugar biosynthesis; UDP-N-acetyl-alpha-D-glucosamine biosynthesis; N-acetyl-alpha-D-glucosamine 1-phosphate from alpha-D-glucosamine 6-phosphate (route II): step 2/2. It functions in the pathway nucleotide-sugar biosynthesis; UDP-N-acetyl-alpha-D-glucosamine biosynthesis; UDP-N-acetyl-alpha-D-glucosamine from N-acetyl-alpha-D-glucosamine 1-phosphate: step 1/1. The protein operates within bacterial outer membrane biogenesis; LPS lipid A biosynthesis. In terms of biological role, catalyzes the last two sequential reactions in the de novo biosynthetic pathway for UDP-N-acetylglucosamine (UDP-GlcNAc). The C-terminal domain catalyzes the transfer of acetyl group from acetyl coenzyme A to glucosamine-1-phosphate (GlcN-1-P) to produce N-acetylglucosamine-1-phosphate (GlcNAc-1-P), which is converted into UDP-GlcNAc by the transfer of uridine 5-monophosphate (from uridine 5-triphosphate), a reaction catalyzed by the N-terminal domain. The protein is Bifunctional protein GlmU of Mycobacterium leprae (strain Br4923).